A 294-amino-acid polypeptide reads, in one-letter code: Ribosomal protein L11 methyltransferase (294 aa).

S-adenosyl-L-methionine-binding residues include Thr-146, Gly-167, Asp-189, and Asn-231.

The protein belongs to the methyltransferase superfamily. PrmA family.

It is found in the cytoplasm. It carries out the reaction L-lysyl-[protein] + 3 S-adenosyl-L-methionine = N(6),N(6),N(6)-trimethyl-L-lysyl-[protein] + 3 S-adenosyl-L-homocysteine + 3 H(+). Methylates ribosomal protein L11. This is Ribosomal protein L11 methyltransferase from Aliivibrio fischeri (strain ATCC 700601 / ES114) (Vibrio fischeri).